The chain runs to 461 residues: Fibrinogen C domain-containing protein 1 (461 aa).

The interval 1-24 is disordered; it reads MVNDRWKTMGGAAQLEDRPRDKPQ. The Cytoplasmic portion of the chain corresponds to 1-33; the sequence is MVNDRWKTMGGAAQLEDRPRDKPQRPSCGYVLC. Residues 15–24 are compositionally biased toward basic and acidic residues; the sequence is LEDRPRDKPQ. Residues 34–54 form a helical; Signal-anchor for type II membrane protein membrane-spanning segment; sequence TVLLALAVLLAVAVTGAVLFL. The Extracellular segment spans residues 55–461; the sequence is NHAHAPGTAP…MKIRPVREDR (407 aa). Residues 214–238 are disordered; the sequence is GRPRNKADLQRAPARGTRPRGCATG. The Fibrinogen C-terminal domain maps to 235–458; the sequence is CATGSRPRDC…FSEMKIRPVR (224 aa). Cysteine 244 and cysteine 273 are joined by a disulfide. Asparagine 340 carries an N-linked (GlcNAc...) asparagine glycan. Ca(2+)-binding residues include aspartate 393 and aspartate 395. Cysteines 401 and 414 form a disulfide.

As to quaternary structure, homotetramer; disulfide-linked. As to expression, expressed in the small and large intestinal epithelial cells with a highly polarized localization to the apical surface corresponding to the brush border and in the ducts of the salivary gland.

It is found in the membrane. Functionally, acetyl group-binding receptor which shows a high-affinity and calcium-dependent binding to acetylated structures such as chitin, some N-acetylated carbohydrates, and amino acids, but not to their non-acetylated counterparts. Can facilitate the endocytosis of acetylated components. This Homo sapiens (Human) protein is Fibrinogen C domain-containing protein 1 (FIBCD1).